Reading from the N-terminus, the 241-residue chain is Homeobox protein TGIF2LX (241 aa).

Disordered regions lie at residues 1 to 56 and 115 to 213; these read MEAA…PKGY and RHGN…EYPD. Over residues 21 to 39 the composition is skewed to polar residues; that stretch reads AKTQSPAQDTSTVSRNSAD. The segment at residues 48 to 111 is a DNA-binding region (homeobox; TALE-type); the sequence is EHTKKPKGYL…INARRRILPD (64 aa).

Belongs to the TALE/TGIF homeobox family.

It localises to the nucleus. May have a transcription role in testis. The chain is Homeobox protein TGIF2LX (TGIF2LX) from Hylobates lar (Lar gibbon).